We begin with the raw amino-acid sequence, 525 residues long: GMP synthase [glutamine-hydrolyzing] (525 aa).

The 199-residue stretch at 9-207 (RILILDFGSQ…VRDICQCEAL (199 aa)) folds into the Glutamine amidotransferase type-1 domain. The active-site Nucleophile is the Cys-86. Active-site residues include His-181 and Glu-183. The GMPS ATP-PPase domain occupies 208 to 400 (WTPAKIIDDA…LGLPYDMLYR (193 aa)). 235–241 (SGGVDSS) contacts ATP.

As to quaternary structure, homodimer.

It carries out the reaction XMP + L-glutamine + ATP + H2O = GMP + L-glutamate + AMP + diphosphate + 2 H(+). Its pathway is purine metabolism; GMP biosynthesis; GMP from XMP (L-Gln route): step 1/1. In terms of biological role, catalyzes the synthesis of GMP from XMP. In Escherichia coli O8 (strain IAI1), this protein is GMP synthase [glutamine-hydrolyzing].